A 442-amino-acid chain; its full sequence is 3-isopropylmalate dehydratase large subunit (442 aa).

3 residues coordinate [4Fe-4S] cluster: Cys-347, Cys-407, and Cys-410.

The protein belongs to the aconitase/IPM isomerase family. LeuC type 1 subfamily. Heterodimer of LeuC and LeuD. It depends on [4Fe-4S] cluster as a cofactor.

It carries out the reaction (2R,3S)-3-isopropylmalate = (2S)-2-isopropylmalate. The protein operates within amino-acid biosynthesis; L-leucine biosynthesis; L-leucine from 3-methyl-2-oxobutanoate: step 2/4. In terms of biological role, catalyzes the isomerization between 2-isopropylmalate and 3-isopropylmalate, via the formation of 2-isopropylmaleate. The protein is 3-isopropylmalate dehydratase large subunit of Buchnera aphidicola subsp. Uroleucon helianthicola.